A 344-amino-acid polypeptide reads, in one-letter code: N-acetyl-gamma-glutamyl-phosphate reductase (344 aa).

Residue C149 is part of the active site.

Belongs to the NAGSA dehydrogenase family. Type 1 subfamily.

It is found in the cytoplasm. It carries out the reaction N-acetyl-L-glutamate 5-semialdehyde + phosphate + NADP(+) = N-acetyl-L-glutamyl 5-phosphate + NADPH + H(+). It functions in the pathway amino-acid biosynthesis; L-arginine biosynthesis; N(2)-acetyl-L-ornithine from L-glutamate: step 3/4. Its function is as follows. Catalyzes the NADPH-dependent reduction of N-acetyl-5-glutamyl phosphate to yield N-acetyl-L-glutamate 5-semialdehyde. The protein is N-acetyl-gamma-glutamyl-phosphate reductase of Thermoanaerobacter pseudethanolicus (strain ATCC 33223 / 39E) (Clostridium thermohydrosulfuricum).